We begin with the raw amino-acid sequence, 465 residues long: 3-isopropylmalate dehydratase large subunit (465 aa).

[4Fe-4S] cluster is bound by residues Cys-347, Cys-407, and Cys-410. Residues 417 to 443 (TLKPGERSASTSNRNFEGRQGKGGRTH) form a disordered region.

It belongs to the aconitase/IPM isomerase family. LeuC type 1 subfamily. In terms of assembly, heterodimer of LeuC and LeuD. The cofactor is [4Fe-4S] cluster.

The catalysed reaction is (2R,3S)-3-isopropylmalate = (2S)-2-isopropylmalate. It functions in the pathway amino-acid biosynthesis; L-leucine biosynthesis; L-leucine from 3-methyl-2-oxobutanoate: step 2/4. Catalyzes the isomerization between 2-isopropylmalate and 3-isopropylmalate, via the formation of 2-isopropylmaleate. The chain is 3-isopropylmalate dehydratase large subunit from Thermobifida fusca (strain YX).